The primary structure comprises 177 residues: Ferritin light chain, oocyte isoform (177 aa).

Residues 9-158 enclose the Ferritin-like diiron domain; sequence QNYHEESEAG…DHLTNLRRVK (150 aa). Positions 26, 64, and 106 each coordinate Fe cation.

The protein belongs to the ferritin family. In terms of assembly, oligomer of 24 subunits. There are two types of subunits: L (light) chain and H (heavy) chain. The functional molecule is roughly spherical and contains a central cavity into which the insoluble mineral iron core is deposited.

Functionally, stores iron in a soluble, non-toxic, readily available form. Important for iron homeostasis. Iron is taken up in the ferrous form and deposited as ferric hydroxides after oxidation. The protein is Ferritin light chain, oocyte isoform of Xenopus laevis (African clawed frog).